A 484-amino-acid polypeptide reads, in one-letter code: Aspartyl/glutamyl-tRNA(Asn/Gln) amidotransferase subunit B (484 aa).

Belongs to the GatB/GatE family. GatB subfamily. As to quaternary structure, heterotrimer of A, B and C subunits.

It carries out the reaction L-glutamyl-tRNA(Gln) + L-glutamine + ATP + H2O = L-glutaminyl-tRNA(Gln) + L-glutamate + ADP + phosphate + H(+). The catalysed reaction is L-aspartyl-tRNA(Asn) + L-glutamine + ATP + H2O = L-asparaginyl-tRNA(Asn) + L-glutamate + ADP + phosphate + 2 H(+). Its function is as follows. Allows the formation of correctly charged Asn-tRNA(Asn) or Gln-tRNA(Gln) through the transamidation of misacylated Asp-tRNA(Asn) or Glu-tRNA(Gln) in organisms which lack either or both of asparaginyl-tRNA or glutaminyl-tRNA synthetases. The reaction takes place in the presence of glutamine and ATP through an activated phospho-Asp-tRNA(Asn) or phospho-Glu-tRNA(Gln). This chain is Aspartyl/glutamyl-tRNA(Asn/Gln) amidotransferase subunit B, found in Anaeromyxobacter dehalogenans (strain 2CP-C).